Reading from the N-terminus, the 1043-residue chain is Isoleucine--tRNA ligase (1043 aa).

Positions 46 and 57 each coordinate L-isoleucyl-5'-AMP. The 'HIGH' region motif lies at 47–57; it reads PTANGLPHVGH. 2 residues coordinate Zn(2+): C181 and C184. Positions 319 and 328 each coordinate L-valine. Zn(2+) is bound by residues C389, C392, C461, C464, C502, and C504. L-isoleucyl-5'-AMP contacts are provided by E550, G551, D553, Q554, and H581. Residues 591–595 carry the 'KMSKS' region motif; it reads KMSKS. K594 provides a ligand contact to ATP.

The protein belongs to the class-I aminoacyl-tRNA synthetase family. IleS type 2 subfamily. In terms of assembly, monomer. Requires Zn(2+) as cofactor.

Its subcellular location is the cytoplasm. It catalyses the reaction tRNA(Ile) + L-isoleucine + ATP = L-isoleucyl-tRNA(Ile) + AMP + diphosphate. In terms of biological role, catalyzes the attachment of isoleucine to tRNA(Ile). As IleRS can inadvertently accommodate and process structurally similar amino acids such as valine, to avoid such errors it has two additional distinct tRNA(Ile)-dependent editing activities. One activity is designated as 'pretransfer' editing and involves the hydrolysis of activated Val-AMP. The other activity is designated 'posttransfer' editing and involves deacylation of mischarged Val-tRNA(Ile). The chain is Isoleucine--tRNA ligase (ileS) from Thermus thermophilus (strain ATCC 27634 / DSM 579 / HB8).